A 359-amino-acid chain; its full sequence is UDP-3-O-acylglucosamine N-acyltransferase (359 aa).

His-253 acts as the Proton acceptor in catalysis.

This sequence belongs to the transferase hexapeptide repeat family. LpxD subfamily. As to quaternary structure, homotrimer.

The enzyme catalyses a UDP-3-O-[(3R)-3-hydroxyacyl]-alpha-D-glucosamine + a (3R)-hydroxyacyl-[ACP] = a UDP-2-N,3-O-bis[(3R)-3-hydroxyacyl]-alpha-D-glucosamine + holo-[ACP] + H(+). Its pathway is bacterial outer membrane biogenesis; LPS lipid A biosynthesis. Catalyzes the N-acylation of UDP-3-O-acylglucosamine using 3-hydroxyacyl-ACP as the acyl donor. Is involved in the biosynthesis of lipid A, a phosphorylated glycolipid that anchors the lipopolysaccharide to the outer membrane of the cell. The protein is UDP-3-O-acylglucosamine N-acyltransferase of Burkholderia lata (strain ATCC 17760 / DSM 23089 / LMG 22485 / NCIMB 9086 / R18194 / 383).